The sequence spans 315 residues: tRNA dimethylallyltransferase (315 aa).

Position 13–20 (13–20 (GPTASGKT)) interacts with ATP. Residue 15 to 20 (TASGKT) coordinates substrate. 4 interaction with substrate tRNA regions span residues 38–41 (DSAL), 162–166 (QRLSR), 243–248 (RCVGYR), and 276–283 (KRQITWLR).

The protein belongs to the IPP transferase family. As to quaternary structure, monomer. It depends on Mg(2+) as a cofactor.

It carries out the reaction adenosine(37) in tRNA + dimethylallyl diphosphate = N(6)-dimethylallyladenosine(37) in tRNA + diphosphate. Functionally, catalyzes the transfer of a dimethylallyl group onto the adenine at position 37 in tRNAs that read codons beginning with uridine, leading to the formation of N6-(dimethylallyl)adenosine (i(6)A). In Vibrio vulnificus (strain YJ016), this protein is tRNA dimethylallyltransferase.